The following is a 290-amino-acid chain: MTLRTITLIAGPTASGKSELALQMAQEKNALIINADSMQVYDVLNILTARPREADTAIVPHYLYGHVSPTLNYSVGQWLCDVEKLLVTFTSRSVIFVGGTGLYFRALLEGISKIPHVPDVVRQKWRLLLNKEGAESLYRQLLQIDAVVAEKISSQDGQRIVRALEVYDATGEKLSWWQKQKTTPLIAPSRAEKILLMRPRALLYERIHKRLDSMIERGVLEEVVAMKKLMLSPSLPVMKAIGIPEFMAYLDGYRSFENALEAAKTQTRRYAKRQMTWFRHQFDEEWMLTS.

An ATP-binding site is contributed by 11-18 (GPTASGKS). 13–18 (TASGKS) serves as a coordination point for substrate. 2 interaction with substrate tRNA regions span residues 36 to 39 (DSMQ) and 158 to 162 (QRIVR).

Belongs to the IPP transferase family. As to quaternary structure, monomer. Mg(2+) is required as a cofactor.

The catalysed reaction is adenosine(37) in tRNA + dimethylallyl diphosphate = N(6)-dimethylallyladenosine(37) in tRNA + diphosphate. Catalyzes the transfer of a dimethylallyl group onto the adenine at position 37 in tRNAs that read codons beginning with uridine, leading to the formation of N6-(dimethylallyl)adenosine (i(6)A). In Bartonella tribocorum (strain CIP 105476 / IBS 506), this protein is tRNA dimethylallyltransferase.